A 481-amino-acid chain; its full sequence is tRNA sulfurtransferase (481 aa).

Positions 54-156 (ADGDGPLRHI…GKDVFFYHEI (103 aa)) constitute a THUMP domain. ATP-binding positions include 174–175 (LV), Lys256, Gly278, and Gln287. Cysteines 334 and 433 form a disulfide. The 76-residue stretch at 388–463 (IPKDAVIIDL…YYSTFSDLKK (76 aa)) folds into the Rhodanese domain. Catalysis depends on Cys433, which acts as the Cysteine persulfide intermediate.

This sequence belongs to the ThiI family.

It localises to the cytoplasm. It catalyses the reaction [ThiI sulfur-carrier protein]-S-sulfanyl-L-cysteine + a uridine in tRNA + 2 reduced [2Fe-2S]-[ferredoxin] + ATP + H(+) = [ThiI sulfur-carrier protein]-L-cysteine + a 4-thiouridine in tRNA + 2 oxidized [2Fe-2S]-[ferredoxin] + AMP + diphosphate. The catalysed reaction is [ThiS sulfur-carrier protein]-C-terminal Gly-Gly-AMP + S-sulfanyl-L-cysteinyl-[cysteine desulfurase] + AH2 = [ThiS sulfur-carrier protein]-C-terminal-Gly-aminoethanethioate + L-cysteinyl-[cysteine desulfurase] + A + AMP + 2 H(+). It functions in the pathway cofactor biosynthesis; thiamine diphosphate biosynthesis. Functionally, catalyzes the ATP-dependent transfer of a sulfur to tRNA to produce 4-thiouridine in position 8 of tRNAs, which functions as a near-UV photosensor. Also catalyzes the transfer of sulfur to the sulfur carrier protein ThiS, forming ThiS-thiocarboxylate. This is a step in the synthesis of thiazole, in the thiamine biosynthesis pathway. The sulfur is donated as persulfide by IscS. In Thermoplasma acidophilum (strain ATCC 25905 / DSM 1728 / JCM 9062 / NBRC 15155 / AMRC-C165), this protein is tRNA sulfurtransferase.